Consider the following 369-residue polypeptide: MPERDPILLTPGPLTTSRMTRDAMLRDWGSWDAAFNRLTKSVCADLVRIAGGGDAYVCVPLQGSGTFAVEATLGTLVPRDARVLVPNNGAYCARIAAILRRLGVAHVELPFAEDEPASAHAIDAALARDARLTHVALVHLETSAGLLNPLDDIAAVCRARGKALIVDAMSSFGALPIALAASGIDALISASGKCLEGVPGMGFAIVRRSALEAAEGRSPSVALDLHDQYAYMQRTSQWRFTPPTHVLAALRAALDQFFDEGGQPARGARYARNCATLVDGMRALGFEPFLDARAQASVIVTFYAPADPAYAFPAFYAAVRDAGYVLYPGKLTTADTFRVGCIGALGADEMRGAVAAIGGALESLGIAMR.

An N6-(pyridoxal phosphate)lysine modification is found at Lys-193.

It belongs to the class-V pyridoxal-phosphate-dependent aminotransferase family. PhnW subfamily. Homodimer. Requires pyridoxal 5'-phosphate as cofactor.

The catalysed reaction is (2-aminoethyl)phosphonate + pyruvate = phosphonoacetaldehyde + L-alanine. Involved in phosphonate degradation. In Burkholderia pseudomallei (strain 668), this protein is 2-aminoethylphosphonate--pyruvate transaminase.